We begin with the raw amino-acid sequence, 1131 residues long: Translation initiation factor IF-2 (1131 aa).

Residues 49 to 542 (KFKGSVSSNE…AFIMPKPQQS (494 aa)) are disordered. The segment covering 60-75 (KSIDNGKASRVEKPEK) has biased composition (basic and acidic residues). Composition is skewed to polar residues over residues 76-88 (NNSVTAKADQTPS) and 108-125 (SEQNVTTGSTESEDNIQS). Basic and acidic residues predominate over residues 127 to 138 (GDRKYQHTDRRP). Polar residues predominate over residues 139–152 (QGNNGEGPQTSTNS). Basic and acidic residues-rich tracts occupy residues 164 to 180 (GDRRPQGQNSGDRRPYN) and 223 to 239 (GDRRPQGQNSGDRRPYN). Residues 411–436 (GQGGYGGRPQGQGSYGGRPQGQGGYA) show a composition bias toward gly residues. Basic and acidic residues-rich tracts occupy residues 450-479 (KDFDKDKDSGYTRSFDKKRTDPKSGEKSSI) and 487-530 (LTKE…DPNR). The tr-type G domain occupies 632–801 (KRPPVVCVMG…ILTAEMGELK (170 aa)). Residues 641–648 (GHVDHGKT) are G1. 641-648 (GHVDHGKT) contacts GTP. The interval 666–670 (GITQH) is G2. The interval 687–690 (DTPG) is G3. GTP is bound by residues 687–691 (DTPGH) and 741–744 (NKID). The interval 741–744 (NKID) is G4. The G5 stretch occupies residues 777–779 (SAH).

Belongs to the TRAFAC class translation factor GTPase superfamily. Classic translation factor GTPase family. IF-2 subfamily.

The protein localises to the cytoplasm. Functionally, one of the essential components for the initiation of protein synthesis. Protects formylmethionyl-tRNA from spontaneous hydrolysis and promotes its binding to the 30S ribosomal subunits. Also involved in the hydrolysis of GTP during the formation of the 70S ribosomal complex. This is Translation initiation factor IF-2 from Lachnoclostridium phytofermentans (strain ATCC 700394 / DSM 18823 / ISDg) (Clostridium phytofermentans).